We begin with the raw amino-acid sequence, 183 residues long: Apo-citrate lyase phosphoribosyl-dephospho-CoA transferase (183 aa).

This sequence belongs to the CitX family.

The catalysed reaction is apo-[citrate lyase ACP] + 2'-(5''-triphospho-alpha-D-ribosyl)-3'-dephospho-CoA = holo-[citrate lyase ACP] + diphosphate. Its function is as follows. Transfers 2-(5''-triphosphoribosyl)-3'-dephosphocoenzyme-A on a serine residue to the apo-acyl carrier protein (gamma chain) of the citrate lyase to yield holo-acyl carrier protein. The protein is Apo-citrate lyase phosphoribosyl-dephospho-CoA transferase of Escherichia coli O6:K15:H31 (strain 536 / UPEC).